We begin with the raw amino-acid sequence, 187 residues long: MSKSASRARLFEIIRRRSFGRGEVTLASGRKSDFYFNLKPTMLDPEGATLLAELTYEALKDDNLDFIGGLEMGAVPLAGALAQISWIKGHPIAAFFVRKKPKEHGAKLAIEGLPRGETLQGKRVVIVEDVTTTGGSAMKAVESVRETGAEVVLVLTMVDREEGATDTFGAAGLPFRSLYKASEFLKA.

Residues Arg-98, Lys-99, Lys-102, His-104, and 128 to 136 (EDVTTTGGS) each bind 5-phospho-alpha-D-ribose 1-diphosphate. Orotate is bound by residues Thr-132 and Arg-160.

Belongs to the purine/pyrimidine phosphoribosyltransferase family. PyrE subfamily. In terms of assembly, homodimer. Requires Mg(2+) as cofactor.

It carries out the reaction orotidine 5'-phosphate + diphosphate = orotate + 5-phospho-alpha-D-ribose 1-diphosphate. Its pathway is pyrimidine metabolism; UMP biosynthesis via de novo pathway; UMP from orotate: step 1/2. Catalyzes the transfer of a ribosyl phosphate group from 5-phosphoribose 1-diphosphate to orotate, leading to the formation of orotidine monophosphate (OMP). This Bradyrhizobium diazoefficiens (strain JCM 10833 / BCRC 13528 / IAM 13628 / NBRC 14792 / USDA 110) protein is Orotate phosphoribosyltransferase.